The chain runs to 91 residues: Probable Fe(2+)-trafficking protein (91 aa).

This sequence belongs to the Fe(2+)-trafficking protein family.

Could be a mediator in iron transactions between iron acquisition and iron-requiring processes, such as synthesis and/or repair of Fe-S clusters in biosynthetic enzymes. In Burkholderia ambifaria (strain MC40-6), this protein is Probable Fe(2+)-trafficking protein.